A 313-amino-acid chain; its full sequence is Tyrosine recombinase XerC (313 aa).

The 87-residue stretch at 11-97 (NSLQKPLERF…SLRSFFDFLI (87 aa)) folds into the Core-binding (CB) domain. The region spanning 118 to 298 (PLPKNLDVDE…DFQHLAQAYD (181 aa)) is the Tyr recombinase domain. Catalysis depends on residues Arg157, Lys181, His250, Arg253, and His276. The O-(3'-phospho-DNA)-tyrosine intermediate role is filled by Tyr285.

The protein belongs to the 'phage' integrase family. XerC subfamily. Forms a cyclic heterotetrameric complex composed of two molecules of XerC and two molecules of XerD.

Its subcellular location is the cytoplasm. Functionally, site-specific tyrosine recombinase, which acts by catalyzing the cutting and rejoining of the recombining DNA molecules. The XerC-XerD complex is essential to convert dimers of the bacterial chromosome into monomers to permit their segregation at cell division. It also contributes to the segregational stability of plasmids. This is Tyrosine recombinase XerC from Vibrio campbellii (strain ATCC BAA-1116).